Here is a 205-residue protein sequence, read N- to C-terminus: Large ribosomal subunit protein bL25 (205 aa).

Belongs to the bacterial ribosomal protein bL25 family. CTC subfamily. Part of the 50S ribosomal subunit; part of the 5S rRNA/L5/L18/L25 subcomplex. Contacts the 5S rRNA. Binds to the 5S rRNA independently of L5 and L18.

In terms of biological role, this is one of the proteins that binds to the 5S RNA in the ribosome where it forms part of the central protuberance. This chain is Large ribosomal subunit protein bL25, found in Bartonella bacilliformis (strain ATCC 35685 / KC583 / Herrer 020/F12,63).